Consider the following 360-residue polypeptide: Capsular polysaccharide phosphotransferase LcbA (360 aa).

Belongs to the stealth family.

Functionally, part of a group II capsule biosynthesis locus. The sequence is that of Capsular polysaccharide phosphotransferase LcbA (lcbA) from Aeromonas hydrophila.